The primary structure comprises 131 residues: Profilin-6 (131 aa).

Cys-13 and Cys-115 are disulfide-bonded. An Involved in PIP2 interaction motif is present at residues 81 to 97 (AVIRGKKGSGGITVKKT). At Thr-111 the chain carries Phosphothreonine.

It belongs to the profilin family. In terms of assembly, occurs in many kinds of cells as a complex with monomeric actin in a 1:1 ratio. Post-translationally, phosphorylated by MAP kinases.

It localises to the cytoplasm. Its subcellular location is the cytoskeleton. In terms of biological role, binds to actin and affects the structure of the cytoskeleton. At high concentrations, profilin prevents the polymerization of actin, whereas it enhances it at low concentrations. The polypeptide is Profilin-6 (Zea mays (Maize)).